An 88-amino-acid polypeptide reads, in one-letter code: N(2)-fixation sustaining protein CowN (88 aa).

It belongs to the CowN family.

In terms of biological role, is required to sustain N(2)-dependent growth in the presence of low levels of carbon monoxide (CO). Probably acts by protecting the N(2) fixation ability of the nitrogenase complex, which is inactivated in the presence of CO. The chain is N(2)-fixation sustaining protein CowN from Rhodomicrobium vannielii (strain ATCC 17100 / DSM 162 / LMG 4299 / NCIMB 10020 / ATH 3.1.1).